Reading from the N-terminus, the 149-residue chain is Sperm surface protein Sp17 (149 aa).

Residues 83-96 (CEQELAKSSGREET) are compositionally biased toward basic and acidic residues. The disordered stretch occupies residues 83–114 (CEQELAKSSGREETPVTPFEESTEEEREQEEA). The segment covering 103 to 113 (ESTEEEREQEE) has biased composition (acidic residues). Residues 112 to 141 (EEAAALKIQSLFRGHVAREEVKKMKSDKNE) form the IQ domain.

In terms of assembly, homodimer. May interact with ROPN1. Testis- and sperm-specific.

Its subcellular location is the membrane. In terms of biological role, sperm surface zona pellucida binding protein. Helps to bind spermatozoa to the zona pellucida with high affinity. Might function in binding zona pellucida and carbohydrates. In Mus musculus (Mouse), this protein is Sperm surface protein Sp17 (Spa17).